The chain runs to 1374 residues: L-2-aminoadipate reductase large subunit (1374 aa).

The region spanning 828–905 (SEFNQQEREI…AFAAEVSRLK (78 aa)) is the Carrier domain. S865 carries the O-(pantetheine 4'-phosphoryl)serine modification.

This sequence belongs to the ATP-dependent AMP-binding enzyme family. As to quaternary structure, heterodimer of an alpha and a beta subunit. Requires pantetheine 4'-phosphate as cofactor.

The enzyme catalyses (S)-2-amino-6-oxohexanoate + NADP(+) + H2O = L-2-aminoadipate + NADPH + 2 H(+). It catalyses the reaction (S)-2-amino-6-oxohexanoate + NAD(+) + H2O = L-2-aminoadipate + NADH + 2 H(+). It carries out the reaction (S)-2-amino-6-oxohexanoate + AMP + diphosphate + NADP(+) = L-2-aminoadipate + ATP + NADPH + H(+). The protein operates within amino-acid biosynthesis; L-lysine biosynthesis via AAA pathway; L-lysine from L-alpha-aminoadipate (fungal route): step 1/3. Functionally, catalyzes the activation of alpha-aminoadipate by ATP-dependent adenylation and the reduction of activated alpha-aminoadipate by NADPH. The activated alpha-aminoadipate is bound to the phosphopantheinyl group of the enzyme itself before it is reduced to (S)-2-amino-6-oxohexanoate. The chain is L-2-aminoadipate reductase large subunit (LYS2) from Candida glabrata (strain ATCC 2001 / BCRC 20586 / JCM 3761 / NBRC 0622 / NRRL Y-65 / CBS 138) (Yeast).